The chain runs to 286 residues: Pyridoxal kinase PdxY (286 aa).

Residues S9 and 44–45 contribute to the substrate site; that span reads TQ. ATP-binding residues include D111, E148, and K181. D222 provides a ligand contact to substrate.

This sequence belongs to the pyridoxine kinase family. PdxY subfamily. As to quaternary structure, homodimer. It depends on Mg(2+) as a cofactor.

The catalysed reaction is pyridoxal + ATP = pyridoxal 5'-phosphate + ADP + H(+). It participates in cofactor metabolism; pyridoxal 5'-phosphate salvage; pyridoxal 5'-phosphate from pyridoxal: step 1/1. Its function is as follows. Pyridoxal kinase involved in the salvage pathway of pyridoxal 5'-phosphate (PLP). Catalyzes the phosphorylation of pyridoxal to PLP. This is Pyridoxal kinase PdxY from Histophilus somni (strain 129Pt) (Haemophilus somnus).